Here is a 233-residue protein sequence, read N- to C-terminus: 2,3,4,5-tetrahydropyridine-2,6-dicarboxylate N-acetyltransferase (233 aa).

This sequence belongs to the transferase hexapeptide repeat family. DapH subfamily.

It carries out the reaction (S)-2,3,4,5-tetrahydrodipicolinate + acetyl-CoA + H2O = L-2-acetamido-6-oxoheptanedioate + CoA. Its pathway is amino-acid biosynthesis; L-lysine biosynthesis via DAP pathway; LL-2,6-diaminopimelate from (S)-tetrahydrodipicolinate (acetylase route): step 1/3. In terms of biological role, catalyzes the transfer of an acetyl group from acetyl-CoA to tetrahydrodipicolinate. This Thermotoga sp. (strain RQ2) protein is 2,3,4,5-tetrahydropyridine-2,6-dicarboxylate N-acetyltransferase.